The chain runs to 373 residues: Alpha-N-acetylgalactosaminide alpha-2,6-sialyltransferase 2 (373 aa).

Residues 1-6 are Cytoplasmic-facing; sequence MDLPRR. Residues 7–27 traverse the membrane as a helical; Signal-anchor for type II membrane protein segment; it reads WLFRMLLLVATSSGILLMLYS. Residues 28–373 are Lumenal-facing; the sequence is SAGQQSPETQ…NAGILWLYQR (346 aa). 2 disulfides stabilise this stretch: C65–C147 and C150–C316. N-linked (GlcNAc...) asparagine glycosylation is present at N103. N155 serves as a coordination point for CMP-N-acetyl-beta-neuraminate. N-linked (GlcNAc...) asparagine glycosylation is present at N160. 3 residues coordinate CMP-N-acetyl-beta-neuraminate: N178, S303, and H335.

It belongs to the glycosyltransferase 29 family. Highly expressed in lactating mammary gland and adult testis. Lower levels in kidney.

It localises to the golgi apparatus membrane. It carries out the reaction a beta-D-galactosyl-(1-&gt;3)-N-acetyl-alpha-D-galactosaminyl derivative + CMP-N-acetyl-beta-neuraminate = a beta-D-galactosyl-(1-&gt;3)-[N-acetyl-alpha-neuraminyl-(2-&gt;6)]-N-acetyl-alpha-D-galactosaminyl derivative + CMP + H(+). It catalyses the reaction a 3-O-[N-acetyl-alpha-D-galactosaminyl]-L-threonyl-[protein] + CMP-N-acetyl-beta-neuraminate = a 3-O-[N-acetyl-alpha-neuraminosyl-(2-&gt;6)-N-acetyl-alpha-D-galactosaminyl]-L-threonyl-[protein] + CMP + H(+). The catalysed reaction is a 3-O-[N-acetyl-alpha-neuraminyl-(2-&gt;3)-beta-D-galactosyl-(1-&gt;3)-N-acetyl-alpha-D-galactosaminyl]-L-threonyl-[protein] + CMP-N-acetyl-beta-neuraminate = a 3-O-{alpha-Neu5Ac-(2-&gt;3)-beta-D-Gal-(1-&gt;3)-[alpha-Neu5Ac-(2-&gt;6)]-alpha-D-GalNAc}-L-threonyl-[protein] + CMP + H(+). Its pathway is protein modification; protein glycosylation. Its function is as follows. Catalyzes the transfer of N-acetylneuraminyl groups onto glycan chains in glycoproteins. Conjugates sialic acid with an alpha-2-6 linkage to N-acetylgalactosamine (GalNAc) glycan chains linked to serine or threonine in glycoproteins. Sialylates alphaGalNAc- and Galbeta1-&gt;3GalNAc-O-Ser/Thr epitopes also known as Tn and T antigens. The chain is Alpha-N-acetylgalactosaminide alpha-2,6-sialyltransferase 2 (St6galnac2) from Mus musculus (Mouse).